Consider the following 359-residue polypeptide: Probable RNA methyltransferase RPD_2859 (359 aa).

E99 functions as the Proton acceptor in the catalytic mechanism. The 226-residue stretch at 105-330 folds into the Radical SAM core domain; that stretch reads RFDGHTACIS…PVVVRDTQGR (226 aa). A disulfide bridge links C112 with C336. C119, C123, and C126 together coordinate [4Fe-4S] cluster. S-adenosyl-L-methionine is bound by residues 162–163, S194, 217–219, and N293; these read GE and SLH. C336 acts as the S-methylcysteine intermediate in catalysis.

This sequence belongs to the radical SAM superfamily. RlmN family. Requires [4Fe-4S] cluster as cofactor.

The protein localises to the cytoplasm. This chain is Probable RNA methyltransferase RPD_2859, found in Rhodopseudomonas palustris (strain BisB5).